Reading from the N-terminus, the 259-residue chain is Thiazole synthase (259 aa).

K100 acts as the Schiff-base intermediate with DXP in catalysis. Residues G161, 187–188, and 209–210 contribute to the 1-deoxy-D-xylulose 5-phosphate site; these read AG and AS.

It belongs to the ThiG family. Homotetramer. Forms heterodimers with either ThiH or ThiS.

The protein resides in the cytoplasm. The catalysed reaction is [ThiS sulfur-carrier protein]-C-terminal-Gly-aminoethanethioate + 2-iminoacetate + 1-deoxy-D-xylulose 5-phosphate = [ThiS sulfur-carrier protein]-C-terminal Gly-Gly + 2-[(2R,5Z)-2-carboxy-4-methylthiazol-5(2H)-ylidene]ethyl phosphate + 2 H2O + H(+). The protein operates within cofactor biosynthesis; thiamine diphosphate biosynthesis. Catalyzes the rearrangement of 1-deoxy-D-xylulose 5-phosphate (DXP) to produce the thiazole phosphate moiety of thiamine. Sulfur is provided by the thiocarboxylate moiety of the carrier protein ThiS. In vitro, sulfur can be provided by H(2)S. This chain is Thiazole synthase, found in Salinispora arenicola (strain CNS-205).